Here is a 215-residue protein sequence, read N- to C-terminus: Redox-sensing transcriptional repressor Rex (215 aa).

Positions 18 to 57 form a DNA-binding region, H-T-H motif; sequence LYYRFLKNLHASGKQRVSSAELSDAVKVDSATIRRDFSYF. Residue 92-97 coordinates NAD(+); the sequence is GVGNLG.

It belongs to the transcriptional regulatory Rex family. As to quaternary structure, homodimer.

It is found in the cytoplasm. Its function is as follows. Modulates transcription in response to changes in cellular NADH/NAD(+) redox state. This Bacillus subtilis (strain 168) protein is Redox-sensing transcriptional repressor Rex.